Reading from the N-terminus, the 111-residue chain is Secreted transmembrane peptide 5 (111 aa).

A signal peptide spans 1–46 (MRLSVFYIFITRLAMTKNATKNEMGSKSPNIVALVLPLLLILYTLS). Residues 66–79 (IVWTPHSNSCGGSP) carry the SCOOP motif motif. The SxS motif essential for MIK2 binding signature appears at 72 to 74 (SNS). A disordered region spans residues 89-111 (TTGRPCRRSRPPGTNIPVSDQSP).

Belongs to the serine rich endogenous peptide (SCOOP) phytocytokine family. As to quaternary structure, interacts with MIK2 (via extracellular leucine-rich repeat domain); this interaction triggers the formation of complex between MIK2 and the BAK1/SERK3 and SERK4 coreceptors, and subsequent BAK1 activation by phosphorylation. Mostly expressed in leaves, and, to a lower extent, in roots, stems, siliques, seeds and flowers.

It is found in the cell membrane. The protein localises to the secreted. Its subcellular location is the extracellular space. The protein resides in the apoplast. Functionally, brassicaceae-specific phytocytokine (plant endogenous peptide released into the apoplast) perceived by MIK2 in a BAK1/SERK3 and SERK4 coreceptors-dependent manner, that modulates various physiological and antimicrobial processes including growth prevention and reactive oxygen species (ROS) response regulation. In Arabidopsis thaliana (Mouse-ear cress), this protein is Secreted transmembrane peptide 5.